The sequence spans 180 residues: UPF0227 protein YcfP (180 aa).

It belongs to the UPF0227 family.

The sequence is that of UPF0227 protein YcfP from Salmonella gallinarum (strain 287/91 / NCTC 13346).